Consider the following 732-residue polypeptide: Glycine--tRNA ligase (732 aa).

The transit peptide at Met1 to Leu27 directs the protein to the mitochondrion. In terms of domain architecture, WHEP-TRS spans Ile61–Phe117. Residue Glu297 participates in glycine binding. ATP is bound by residues Arg329–Glu331 and Arg340–Val341. Glu348 serves as a coordination point for glycine. Glu453 to Cys454 lines the ATP pocket. Glu572–Ser574 serves as a coordination point for glycine. Position 579 (Arg579) interacts with ATP.

This sequence belongs to the class-II aminoacyl-tRNA synthetase family. As to quaternary structure, homodimer.

The protein localises to the mitochondrion. It localises to the cytoplasm. Its subcellular location is the cell projection. The protein resides in the axon. It carries out the reaction tRNA(Gly) + glycine + ATP = glycyl-tRNA(Gly) + AMP + diphosphate. The enzyme catalyses 2 ATP + H(+) = P(1),P(4)-bis(5'-adenosyl) tetraphosphate + diphosphate. Its function is as follows. Catalyzes the ATP-dependent ligation of glycine to the 3'-end of its cognate tRNA, via the formation of an aminoacyl-adenylate intermediate (Gly-AMP). Also produces diadenosine tetraphosphate (Ap4A), a universal pleiotropic signaling molecule needed for cell regulation pathways, by direct condensation of 2 ATPs. Thereby, may play a special role in Ap4A homeostasis. Required for terminal arborization of both dendrites and axons during development. The protein is Glycine--tRNA ligase of Bombyx mori (Silk moth).